The following is a 239-amino-acid chain: TPR repeat-containing protein TP_0282 (239 aa).

The chain crosses the membrane as a helical span at residues 21–43 (LLVGVLVAILGGLGLSAGCLLVM). TPR repeat units follow at residues 112–145 (AYAQACVADIFFARKEWEKAQQAYVRAAYGARRS) and 149–182 (GVYYFNAASCADERGRFEEARELYQRSARVQDFP).

Its subcellular location is the cell membrane. The protein is TPR repeat-containing protein TP_0282 of Treponema pallidum (strain Nichols).